The sequence spans 328 residues: Transcription initiation factor TFIID subunit 8 (328 aa).

The Histone-fold domain occupies 16–83 (RRILNKVVSQ…DVSLALINMG (68 aa)). The interval 229–309 (NRTEDEPSKD…PGTMPSRSLA (81 aa)) is disordered. 3 positions are modified to phosphoserine: Ser-236, Ser-245, and Ser-255. The segment covering 239-251 (DGEEGDSENEEMD) has biased composition (acidic residues). A compositionally biased stretch (basic and acidic residues) spans 252–264 (GDKSKEEKPELDI). Positions 296-309 (NCPTPGTMPSRSLA) are enriched in polar residues.

It belongs to the TAF8 family. In terms of assembly, belongs to the TFIID complex which is composed of TATA binding protein (Tbp) and a number of TBP-associated factors (TAFs). Histone fold interacts with N-terminus of Taf10b.

The protein resides in the nucleus. Its function is as follows. TFIID is a multimeric protein complex that plays a central role in mediating promoter responses to various activators and repressors. This is Transcription initiation factor TFIID subunit 8 from Drosophila melanogaster (Fruit fly).